A 193-amino-acid polypeptide reads, in one-letter code: Potassium-transporting ATPase KdpC subunit (193 aa).

Residues 7–27 (PLVVLFVVLTAVTGLAYPAVM) traverse the membrane as a helical segment.

This sequence belongs to the KdpC family. The system is composed of three essential subunits: KdpA, KdpB and KdpC.

The protein localises to the cell inner membrane. In terms of biological role, part of the high-affinity ATP-driven potassium transport (or Kdp) system, which catalyzes the hydrolysis of ATP coupled with the electrogenic transport of potassium into the cytoplasm. This subunit acts as a catalytic chaperone that increases the ATP-binding affinity of the ATP-hydrolyzing subunit KdpB by the formation of a transient KdpB/KdpC/ATP ternary complex. The chain is Potassium-transporting ATPase KdpC subunit from Burkholderia orbicola (strain MC0-3).